Here is a 320-residue protein sequence, read N- to C-terminus: Alpha/beta hydrolase domain-containing protein 17C (320 aa).

Residues 50–75 are disordered; that stretch reads RAPAPAATPAPAPAAQPAPAEEGAGP. Pro residues predominate over residues 55-65; the sequence is AATPAPAPAAQ. Active-site charge relay system residues include S202, D267, and H296.

The protein belongs to the AB hydrolase superfamily. ABHD17 family. Palmitoylated on cysteine residues located in a cysteine cluster at the N-terminus which promotes membrane localization. Palmitoylation is required for post-synaptic localization and for depalmitoylating activity towards DLG4/PSD95.

Its subcellular location is the recycling endosome membrane. It is found in the cell projection. The protein resides in the dendritic spine. The protein localises to the postsynaptic density membrane. The catalysed reaction is S-hexadecanoyl-L-cysteinyl-[protein] + H2O = L-cysteinyl-[protein] + hexadecanoate + H(+). Its function is as follows. Hydrolyzes fatty acids from S-acylated cysteine residues in proteins. Has depalmitoylating activity towards DLG4/PSD95. This chain is Alpha/beta hydrolase domain-containing protein 17C, found in Mus musculus (Mouse).